A 118-amino-acid chain; its full sequence is Large ribosomal subunit protein bL20 (118 aa).

Belongs to the bacterial ribosomal protein bL20 family.

Binds directly to 23S ribosomal RNA and is necessary for the in vitro assembly process of the 50S ribosomal subunit. It is not involved in the protein synthesizing functions of that subunit. The sequence is that of Large ribosomal subunit protein bL20 from Pseudomonas entomophila (strain L48).